Here is a 198-residue protein sequence, read N- to C-terminus: Septum-promoting GTP-binding protein 1 (198 aa).

Residues 6 to 198 form a small GTPase-like region; the sequence is KNNVTIKVGM…GDPILEYIDR (193 aa). GTP-binding positions include 17 to 24, 65 to 69, and 122 to 125; these read GDSSIGKT, DLGGQ, and TKYD.

In terms of assembly, interacts with cdc7 and cdc11.

Its function is as follows. GTP-binding protein essential for the induction of septum formation at G2 and pre-START stages of mitosis. Acts via the cdc7 protein kinase pathway. The protein is Septum-promoting GTP-binding protein 1 (spg1) of Schizosaccharomyces pombe (strain 972 / ATCC 24843) (Fission yeast).